The following is a 1055-amino-acid chain: RapA guanosine triphosphatase-activating protein 1 (1055 aa).

Disordered regions lie at residues 76 to 100, 256 to 292, 418 to 525, 544 to 570, 603 to 629, and 943 to 969; these read LSPQHHSRQIQQQQHEKITPEEEER, NHQPGASTPRPSHSSSSSLSHSLSSSPMSQSLPSSLT, QQLL…FLGV, THATKEAAANQHHHSHNNIGSVLSPPL, TTQLQQQQQQQQQQQTTSQPTQPPPSE, and NNNSSNNNNNNNNNNNNNNNSDSNLPT. Residues 89–100 show a composition bias toward basic and acidic residues; that stretch reads QHEKITPEEEER. Low complexity-rich tracts occupy residues 262 to 292, 442 to 455, and 469 to 482; these read STPRPSHSSSSSLSHSLSSSPMSQSLPSSLT, DFNLNNNSTNNNNN, and TTTTTTTTNNNNNN. The span at 483 to 494 shows a compositional bias: polar residues; sequence ISPQHSGTSGSP. Low complexity-rich tracts occupy residues 603–622 and 943–966; these read TTQLQQQQQQQQQQQTTSQP and NNNSSNNNNNNNNNNNNNNNSDSN. The 270-residue stretch at 779–1048 folds into the Rap-GAP domain; sequence LIQFEAKNIH…RTRKEFLHSF (270 aa).

The protein localises to the cytoplasm. It is found in the cell cortex. In terms of biological role, mediates the deactivation of rap1 and plays an important role in spatially and temporally regulating cell adhesion and chemotaxis by controlling attachment disassembly in the leading edge through the regulation of myosin II assembly and disassembly. Overexpression leads to defective chemotaxis. This Dictyostelium discoideum (Social amoeba) protein is RapA guanosine triphosphatase-activating protein 1 (rapgap1).